The chain runs to 370 residues: Peptide chain release factor 1 (370 aa).

Gln-231 is subject to N5-methylglutamine. The segment covering 284–293 has biased composition (basic and acidic residues); that stretch reads AREERERETR. Positions 284–303 are disordered; the sequence is AREERERETRAAQVGTGERS.

Belongs to the prokaryotic/mitochondrial release factor family. In terms of processing, methylated by PrmC. Methylation increases the termination efficiency of RF1.

It is found in the cytoplasm. Peptide chain release factor 1 directs the termination of translation in response to the peptide chain termination codons UAG and UAA. In Deinococcus geothermalis (strain DSM 11300 / CIP 105573 / AG-3a), this protein is Peptide chain release factor 1.